Here is a 223-residue protein sequence, read N- to C-terminus: RNA polymerase sigma-H factor (223 aa).

The Polymerase core binding signature appears at Asp67–Ile80. The H-T-H motif DNA-binding region spans Tyr187–Gln206.

The protein belongs to the sigma-70 factor family.

Sigma factors are initiation factors that promote the attachment of RNA polymerase to specific initiation sites and are then released. This sigma factor is involved in the transition to post-exponential phase in the beginning of sporulation. This is RNA polymerase sigma-H factor (sigH) from Bacillus licheniformis.